A 154-amino-acid polypeptide reads, in one-letter code: Small ribosomal subunit protein uS15 (154 aa).

Positions Met-1–Arg-14 are enriched in basic residues. The tract at residues Met-1–Thr-24 is disordered.

This sequence belongs to the universal ribosomal protein uS15 family. In terms of assembly, part of the 30S ribosomal subunit.

This Pyrobaculum arsenaticum (strain DSM 13514 / JCM 11321 / PZ6) protein is Small ribosomal subunit protein uS15.